Consider the following 565-residue polypeptide: Thiol:disulfide interchange protein DsbD (565 aa).

Positions 1 to 19 (MAQRIFTLILLLCSTSVFA) are cleaved as a signal peptide. 2 disulfide bridges follow: C122–C128 and C182–C304. 7 consecutive transmembrane segments (helical) span residues 163 to 183 (LPFSALWALLIGIGIAFTPCV), 208 to 228 (LLTFIYVQGMALTYTALGLVV), 243 to 263 (YVLIGLAIVFTLLAMSMFGLF), 289 to 309 (GVFIMGAIAGLICSPCTTAPL), 323 to 343 (WLGGGTLYLYALGMGLPLMLI), 357 to 377 (WMEQVKTAFGFVILALPVFLL), and 384 to 404 (IWGLRLWSALGVAFFGWAFIT). A Thioredoxin domain is found at 434–565 (WAFGATHTAQ…FSAHLRDRQP (132 aa)). A disulfide bridge links C480 with C483.

This sequence belongs to the thioredoxin family. DsbD subfamily.

Its subcellular location is the cell inner membrane. The catalysed reaction is [protein]-dithiol + NAD(+) = [protein]-disulfide + NADH + H(+). It catalyses the reaction [protein]-dithiol + NADP(+) = [protein]-disulfide + NADPH + H(+). In terms of biological role, required to facilitate the formation of correct disulfide bonds in some periplasmic proteins and for the assembly of the periplasmic c-type cytochromes. Acts by transferring electrons from cytoplasmic thioredoxin to the periplasm. This transfer involves a cascade of disulfide bond formation and reduction steps. This Escherichia coli O6:H1 (strain CFT073 / ATCC 700928 / UPEC) protein is Thiol:disulfide interchange protein DsbD.